A 138-amino-acid chain; its full sequence is UPF0355 protein SSP2326 (138 aa).

Positions 115–138 are disordered; that stretch reads NVAFETNQTKSNSHYSEETNGPKS. The span at 118-138 shows a compositional bias: polar residues; sequence FETNQTKSNSHYSEETNGPKS.

The protein belongs to the UPF0355 family.

This Staphylococcus saprophyticus subsp. saprophyticus (strain ATCC 15305 / DSM 20229 / NCIMB 8711 / NCTC 7292 / S-41) protein is UPF0355 protein SSP2326.